The following is a 235-amino-acid chain: Ribosomal RNA small subunit methyltransferase G (235 aa).

S-adenosyl-L-methionine is bound by residues G74, L79, 124–125 (AE), and R142. The segment at 211-235 (RRRAAKPGRNKSGRTARSRGRTGRR) is disordered. Residues 213–235 (RAAKPGRNKSGRTARSRGRTGRR) show a composition bias toward basic residues.

This sequence belongs to the methyltransferase superfamily. RNA methyltransferase RsmG family.

The protein localises to the cytoplasm. Its function is as follows. Specifically methylates the N7 position of guanine in position 518 of 16S rRNA. This Mycolicibacterium smegmatis (strain ATCC 700084 / mc(2)155) (Mycobacterium smegmatis) protein is Ribosomal RNA small subunit methyltransferase G.